The chain runs to 391 residues: ATP phosphoribosyltransferase regulatory subunit (391 aa).

Belongs to the class-II aminoacyl-tRNA synthetase family. HisZ subfamily. In terms of assembly, heteromultimer composed of HisG and HisZ subunits.

The protein localises to the cytoplasm. Its pathway is amino-acid biosynthesis; L-histidine biosynthesis; L-histidine from 5-phospho-alpha-D-ribose 1-diphosphate: step 1/9. Required for the first step of histidine biosynthesis. May allow the feedback regulation of ATP phosphoribosyltransferase activity by histidine. This Prochlorococcus marinus (strain NATL1A) protein is ATP phosphoribosyltransferase regulatory subunit.